Reading from the N-terminus, the 271-residue chain is Chymotrypsin BII (271 aa).

Positions 1-15 (MIGKLSLLLVCVAVA) are cleaved as a signal peptide. Residues 16-45 (SGNPAAGKPWHWKSPKPLVDPRIHVNATPR) constitute a propeptide, activation peptide. A Peptidase S1 domain is found at 46 to 268 (IVGGVEATPH…YLDWIEQKTG (223 aa)). Cys-71 and Cys-87 are disulfide-bonded. Catalysis depends on charge relay system residues His-86 and Asp-132. Disulfide bonds link Cys-196/Cys-209 and Cys-219/Cys-245. Ser-223 functions as the Charge relay system in the catalytic mechanism.

It belongs to the peptidase S1 family.

The protein localises to the secreted. It localises to the extracellular space. It catalyses the reaction Preferential cleavage: Tyr-|-Xaa, Trp-|-Xaa, Phe-|-Xaa, Leu-|-Xaa.. Serine protease with chymotryptic and collagenolytic activities. This is Chymotrypsin BII from Penaeus vannamei (Whiteleg shrimp).